Consider the following 280-residue polypeptide: Bifunctional protein FolD (280 aa).

Residues 161–163 (GRS), serine 186, and isoleucine 227 contribute to the NADP(+) site.

Belongs to the tetrahydrofolate dehydrogenase/cyclohydrolase family. As to quaternary structure, homodimer.

The catalysed reaction is (6R)-5,10-methylene-5,6,7,8-tetrahydrofolate + NADP(+) = (6R)-5,10-methenyltetrahydrofolate + NADPH. It carries out the reaction (6R)-5,10-methenyltetrahydrofolate + H2O = (6R)-10-formyltetrahydrofolate + H(+). It functions in the pathway one-carbon metabolism; tetrahydrofolate interconversion. In terms of biological role, catalyzes the oxidation of 5,10-methylenetetrahydrofolate to 5,10-methenyltetrahydrofolate and then the hydrolysis of 5,10-methenyltetrahydrofolate to 10-formyltetrahydrofolate. This is Bifunctional protein FolD from Caldanaerobacter subterraneus subsp. tengcongensis (strain DSM 15242 / JCM 11007 / NBRC 100824 / MB4) (Thermoanaerobacter tengcongensis).